The chain runs to 715 residues: Elongation factor G (715 aa).

One can recognise a tr-type G domain in the interval 8-290; the sequence is NRYRNIGICA…AVIDFLPAPT (283 aa). GTP contacts are provided by residues 17 to 24, 88 to 92, and 142 to 145; these read AHVDAGKT, DTPGH, and NKMD.

The protein belongs to the TRAFAC class translation factor GTPase superfamily. Classic translation factor GTPase family. EF-G/EF-2 subfamily.

The protein resides in the cytoplasm. Functionally, catalyzes the GTP-dependent ribosomal translocation step during translation elongation. During this step, the ribosome changes from the pre-translocational (PRE) to the post-translocational (POST) state as the newly formed A-site-bound peptidyl-tRNA and P-site-bound deacylated tRNA move to the P and E sites, respectively. Catalyzes the coordinated movement of the two tRNA molecules, the mRNA and conformational changes in the ribosome. The chain is Elongation factor G from Pseudomonas fluorescens (strain ATCC BAA-477 / NRRL B-23932 / Pf-5).